Consider the following 226-residue polypeptide: Movement and silencing protein TGBp1 (226 aa).

The (+)RNA virus helicase ATP-binding domain maps to 1 to 115 (MDILIISLKS…EFSLEPHFYL (115 aa)). Residues 116-226 (ETSFRVPRKV…KGLTYVRAGT (111 aa)) form the (+)RNA virus helicase C-terminal domain.

It belongs to the Tymovirales TGBp1 protein family. In terms of assembly, homodimer and homooligomer. Interacts with capsid protein. Interacts with host AGO1; this interaction targets the host protein for degradation, thereby suppressing the antiviral RNA silencing.

It localises to the host cytoplasm. In terms of biological role, transports viral genome to neighboring plant cells directly through plasmosdesmata, without any budding. The movement protein allows efficient cell to cell propagation, by bypassing the host cell wall barrier. Increases plasmodesma size exclusion limit. Acts as a suppressor of RNA-mediated gene silencing, also known as post-transcriptional gene silencing (PTGS), a mechanism of plant viral defense that limits the accumulation of viral RNAs. The chain is Movement and silencing protein TGBp1 from Brassica campestris (Field mustard).